The primary structure comprises 1067 residues: DNA-directed RNA polymerase subunit beta (1067 aa).

Belongs to the RNA polymerase beta chain family. As to quaternary structure, in plastids the minimal PEP RNA polymerase catalytic core is composed of four subunits: alpha, beta, beta', and beta''. When a (nuclear-encoded) sigma factor is associated with the core the holoenzyme is formed, which can initiate transcription.

The protein resides in the plastid. The protein localises to the chloroplast. It catalyses the reaction RNA(n) + a ribonucleoside 5'-triphosphate = RNA(n+1) + diphosphate. DNA-dependent RNA polymerase catalyzes the transcription of DNA into RNA using the four ribonucleoside triphosphates as substrates. This chain is DNA-directed RNA polymerase subunit beta, found in Ipomoea purpurea (Common morning glory).